Here is a 63-residue protein sequence, read N- to C-terminus: Disintegrin schistatin-like subunit B (63 aa).

In terms of domain architecture, Disintegrin spans 1 to 63 (NSVNPCCDPQ…TPDCPRNRYN (63 aa)). 4 disulfide bridges follow: Cys6–Cys29, Cys20–Cys26, Cys25–Cys50, and Cys38–Cys57. Positions 42 to 44 (RGD) match the Cell attachment site motif.

The protein belongs to the disintegrin family. Dimeric disintegrin subfamily. As to quaternary structure, heterodimer with subunit A; disulfide-linked. Expressed by the venom gland.

The protein resides in the secreted. In terms of biological role, may bind to both alpha-IIb/beta-3 (ITGA2B/ITGB3) and alpha-V/beta-3 (ITGAV/ITGB3) integrins, and may inhibit platelet aggregation. In Echis carinatus (Saw-scaled viper), this protein is Disintegrin schistatin-like subunit B.